The primary structure comprises 256 residues: Ubiquinone/menaquinone biosynthesis C-methyltransferase UbiE (256 aa).

Positions 1 to 19 (MQNRSSSPDSSSAGNTHFG) are enriched in polar residues. Positions 1-24 (MQNRSSSPDSSSAGNTHFGFQSVP) are disordered. Residues Thr-81, Asp-102, and 128–129 (DA) contribute to the S-adenosyl-L-methionine site.

The protein belongs to the class I-like SAM-binding methyltransferase superfamily. MenG/UbiE family.

The enzyme catalyses a 2-demethylmenaquinol + S-adenosyl-L-methionine = a menaquinol + S-adenosyl-L-homocysteine + H(+). The catalysed reaction is a 2-methoxy-6-(all-trans-polyprenyl)benzene-1,4-diol + S-adenosyl-L-methionine = a 5-methoxy-2-methyl-3-(all-trans-polyprenyl)benzene-1,4-diol + S-adenosyl-L-homocysteine + H(+). The protein operates within quinol/quinone metabolism; menaquinone biosynthesis; menaquinol from 1,4-dihydroxy-2-naphthoate: step 2/2. Its pathway is cofactor biosynthesis; ubiquinone biosynthesis. In terms of biological role, methyltransferase required for the conversion of demethylmenaquinol (DMKH2) to menaquinol (MKH2) and the conversion of 2-polyprenyl-6-methoxy-1,4-benzoquinol (DDMQH2) to 2-polyprenyl-3-methyl-6-methoxy-1,4-benzoquinol (DMQH2). The chain is Ubiquinone/menaquinone biosynthesis C-methyltransferase UbiE from Bordetella avium (strain 197N).